A 147-amino-acid polypeptide reads, in one-letter code: Cyanate hydratase (147 aa).

Catalysis depends on residues Arg88, Glu91, and Ser114.

This sequence belongs to the cyanase family.

The enzyme catalyses cyanate + hydrogencarbonate + 3 H(+) = NH4(+) + 2 CO2. Functionally, catalyzes the reaction of cyanate with bicarbonate to produce ammonia and carbon dioxide. The protein is Cyanate hydratase of Ralstonia pickettii (strain 12J).